Consider the following 921-residue polypeptide: uncharacterized protein (921 aa).

A kinase-like region spans residues 334-628 (MTKRKFLSID…NLKSIYYDFF (295 aa)). The segment covering 401-494 (GSSEWSFGSS…NNNNSDGSSG (94 aa)) has biased composition (low complexity). 2 disordered regions span residues 401 to 499 (GSSE…DNRN) and 664 to 711 (NLYS…NSNS).

This is an uncharacterized protein from Dictyostelium discoideum (Social amoeba).